The primary structure comprises 884 residues: Alanine--tRNA ligase (884 aa).

Zn(2+) is bound by residues histidine 568, histidine 572, cysteine 670, and histidine 674.

It belongs to the class-II aminoacyl-tRNA synthetase family. The cofactor is Zn(2+).

The protein resides in the cytoplasm. It catalyses the reaction tRNA(Ala) + L-alanine + ATP = L-alanyl-tRNA(Ala) + AMP + diphosphate. Its function is as follows. Catalyzes the attachment of alanine to tRNA(Ala) in a two-step reaction: alanine is first activated by ATP to form Ala-AMP and then transferred to the acceptor end of tRNA(Ala). Also edits incorrectly charged Ser-tRNA(Ala) and Gly-tRNA(Ala) via its editing domain. This chain is Alanine--tRNA ligase, found in Synechococcus sp. (strain JA-2-3B'a(2-13)) (Cyanobacteria bacterium Yellowstone B-Prime).